We begin with the raw amino-acid sequence, 251 residues long: Triosephosphate isomerase (251 aa).

9 to 11 serves as a coordination point for substrate; sequence NWK. Residue H95 is the Electrophile of the active site. Catalysis depends on E167, which acts as the Proton acceptor. Residues G173, S213, and 234–235 contribute to the substrate site; that span reads GG. S213 carries the post-translational modification Phosphoserine.

This sequence belongs to the triosephosphate isomerase family. As to quaternary structure, homodimer.

The protein localises to the cytoplasm. The catalysed reaction is D-glyceraldehyde 3-phosphate = dihydroxyacetone phosphate. Its pathway is carbohydrate biosynthesis; gluconeogenesis. It participates in carbohydrate degradation; glycolysis; D-glyceraldehyde 3-phosphate from glycerone phosphate: step 1/1. Its function is as follows. Involved in the gluconeogenesis. Catalyzes stereospecifically the conversion of dihydroxyacetone phosphate (DHAP) to D-glyceraldehyde-3-phosphate (G3P). This is Triosephosphate isomerase from Bacillus cereus (strain AH820).